The sequence spans 551 residues: Solute carrier family 22 member 27 (551 aa).

The Cytoplasmic segment spans residues 1–15 (MSFQELLNQVGSLGR). A helical transmembrane segment spans residues 16 to 36 (FQILQIVFLLLLNAIVVPHIA). Topologically, residues 37-145 (MENFTAAIPN…DLVCESQALN (109 aa)) are extracellular. Asparagine 39, asparagine 56, asparagine 62, asparagine 102, and asparagine 107 each carry an N-linked (GlcNAc...) asparagine glycan. Residues 146–166 (SVTKFSFMIGLFIGGIICGHL) traverse the membrane as a helical segment. Over 167–173 (SDRLGRK) the chain is Cytoplasmic. The helical transmembrane segment at 174–194 (FILTCALLQFAITETCVAFAP) threads the bilayer. The Extracellular portion of the chain corresponds to 195-203 (SFFIYCSLR). A helical transmembrane segment spans residues 204 to 224 (FLAGLSVEPILVNSHLLMLEW). At 225–234 (TSPKFLTMMA) the chain is on the cytoplasmic side. A helical transmembrane segment spans residues 235 to 255 (ALLSCAPNIGYMISAGLAFLF). Topologically, residues 256 to 258 (RIW) are extracellular. Residues 259–279 (HHLQLTMSVPIFFFLILTRWL) traverse the membrane as a helical segment. Residues 280–348 (SESARWLIVT…LFHTSILRKR (69 aa)) lie on the Cytoplasmic side of the membrane. The helical transmembrane segment at 349 to 369 (ICVLSFMRLFFTVSIFGLAVH) threads the bilayer. Topologically, residues 370 to 376 (LQHLSSN) are extracellular. The chain crosses the membrane as a helical span at residues 377–397 (IILLQFLISALAILVSVIGPF). Residues 398–405 (VLNHIGRR) lie on the Cytoplasmic side of the membrane. Residues 406–426 (ITYLVLMSLRGIFILIAVFVP) traverse the membrane as a helical segment. Topologically, residues 427–432 (QEMQTL) are extracellular. The helical transmembrane segment at 433–453 (RIIMATLAEGISSLCVGVSRL) threads the bilayer. At 454–467 (HTNELLPTTLRATA) the chain is on the cytoplasmic side. The helical transmembrane segment at 468–488 (VGVIGFFGNSGSFLSPLFMLL) threads the bilayer. Over 489–494 (ATYYAN) the chain is Extracellular. The chain crosses the membrane as a helical span at residues 495–515 (MPWIFYGGFSIFNAFTVFLLP). Residues 516-551 (ETKNQPLPDSTHDVGNDWKESRKGKKEDPIIKVTRF) lie on the Cytoplasmic side of the membrane. Residues 523–551 (PDSTHDVGNDWKESRKGKKEDPIIKVTRF) are disordered. A compositionally biased stretch (basic and acidic residues) spans 525-545 (STHDVGNDWKESRKGKKEDPI).

It belongs to the major facilitator (TC 2.A.1) superfamily. Organic cation transporter (TC 2.A.1.19) family. Expressed in proximal kidney tubules, and in liver hepatocytes (at protein level).

The protein localises to the cell membrane. Its function is as follows. Does not appear to have transporter activity. Sodium-independent organic anion transporter which exhibits high specificity for L-carnitine. Can also transport salicylic acid and the drug cimetidine. This chain is Solute carrier family 22 member 27, found in Mus musculus (Mouse).